The primary structure comprises 343 residues: N-acetyl-gamma-glutamyl-phosphate reductase (343 aa).

Residue cysteine 149 is part of the active site.

The protein belongs to the NAGSA dehydrogenase family. Type 1 subfamily.

The protein localises to the cytoplasm. The enzyme catalyses N-acetyl-L-glutamate 5-semialdehyde + phosphate + NADP(+) = N-acetyl-L-glutamyl 5-phosphate + NADPH + H(+). Its pathway is amino-acid biosynthesis; L-arginine biosynthesis; N(2)-acetyl-L-ornithine from L-glutamate: step 3/4. Catalyzes the NADPH-dependent reduction of N-acetyl-5-glutamyl phosphate to yield N-acetyl-L-glutamate 5-semialdehyde. The sequence is that of N-acetyl-gamma-glutamyl-phosphate reductase from Methanococcus maripaludis (strain C7 / ATCC BAA-1331).